A 647-amino-acid chain; its full sequence is 5-aminolevulinate synthase, non-specific, mitochondrial (647 aa).

The transit peptide at 1-56 (METVVRRCPFLSRVPQAFLQKAGKSLLFYAQNCPKMMEIGAKPAPRALSTSAVLCQ) directs the protein to the mitochondrion. The segment at 61 to 112 (TPPANEKDKAAKAEVQQAPDGSQQAPDGSQQTADGTQLPSGHPSLASSQGTG) is disordered. Residues 79-112 (PDGSQQAPDGSQQTADGTQLPSGHPSLASSQGTG) are compositionally biased toward polar residues. Positions 224, 341, and 360 each coordinate substrate. Residues Ser393, His421, and Thr449 each coordinate pyridoxal 5'-phosphate. The active site involves Lys452. Lys452 is modified (N6-(pyridoxal phosphate)lysine). 2 residues coordinate pyridoxal 5'-phosphate: Thr481 and Thr482. A substrate-binding site is contributed by Thr569. The residue at position 583 (Pro583) is a Hydroxyproline.

This sequence belongs to the class-II pyridoxal-phosphate-dependent aminotransferase family. Homodimer. Interacts (hydroxylated form) with VHL. Pyridoxal 5'-phosphate is required as a cofactor. In terms of processing, in normoxia, is hydroxylated at Pro-583, promoting interaction with VHL, initiating ubiquitination and subsequent degradation via the proteasome. Post-translationally, ubiquitinated; in normoxia following hydroxylation and interaction with VHL, leading to its subsequent degradation via the proteasome.

Its subcellular location is the mitochondrion inner membrane. It carries out the reaction succinyl-CoA + glycine + H(+) = 5-aminolevulinate + CO2 + CoA. It participates in porphyrin-containing compound metabolism; protoporphyrin-IX biosynthesis; 5-aminolevulinate from glycine: step 1/1. Catalyzes the pyridoxal 5'-phosphate (PLP)-dependent condensation of succinyl-CoA and glycine to form aminolevulinic acid (ALA), with CoA and CO2 as by-products. The protein is 5-aminolevulinate synthase, non-specific, mitochondrial (ALAS1) of Bos taurus (Bovine).